The sequence spans 309 residues: HPr kinase/phosphorylase (309 aa).

Active-site residues include H138 and K159. 153–160 (GQSGVGKS) is a binding site for ATP. A Mg(2+)-binding site is contributed by S160. D177 (proton acceptor; for phosphorylation activity. Proton donor; for dephosphorylation activity) is an active-site residue. An important for the catalytic mechanism of both phosphorylation and dephosphorylation region spans residues 201 to 210 (LEIRGLGIIN). Residue E202 participates in Mg(2+) binding. Residue R243 is part of the active site. Residues 264–269 (PVRPGR) are important for the catalytic mechanism of dephosphorylation.

It belongs to the HPrK/P family. As to quaternary structure, homohexamer. Mg(2+) is required as a cofactor.

It carries out the reaction [HPr protein]-L-serine + ATP = [HPr protein]-O-phospho-L-serine + ADP + H(+). The enzyme catalyses [HPr protein]-O-phospho-L-serine + phosphate + H(+) = [HPr protein]-L-serine + diphosphate. Catalyzes the ATP- as well as the pyrophosphate-dependent phosphorylation of a specific serine residue in HPr, a phosphocarrier protein of the phosphoenolpyruvate-dependent sugar phosphotransferase system (PTS). HprK/P also catalyzes the pyrophosphate-producing, inorganic phosphate-dependent dephosphorylation (phosphorolysis) of seryl-phosphorylated HPr (P-Ser-HPr). The two antagonistic activities of HprK/P are regulated by several intracellular metabolites, which change their concentration in response to the absence or presence of rapidly metabolisable carbon sources (glucose, fructose, etc.) in the growth medium. Also phosphorylates/dephosphorylates the HPr-like catabolite repression protein crh on a specific serine residue. Therefore, by controlling the phosphorylation state of HPr and crh, HPrK/P is a sensor enzyme that plays a major role in the regulation of carbon metabolism and sugar transport: it mediates carbon catabolite repression (CCR), and regulates PTS-catalyzed carbohydrate uptake and inducer exclusion. The protein is HPr kinase/phosphorylase of Bacillus cereus (strain B4264).